The sequence spans 459 residues: Zinc finger chaperone zpr1 (459 aa).

2 C4-type zinc fingers span residues 38–70 (CMEC…CPHC) and 259–291 (CPSC…CDRC).

Belongs to the ZPR1 family.

It is found in the cytoplasm. The protein localises to the nucleus. In terms of biological role, acts as a protein folding chaperone for elongation factor 1-alpha. The polypeptide is Zinc finger chaperone zpr1 (Schizosaccharomyces pombe (strain 972 / ATCC 24843) (Fission yeast)).